The sequence spans 332 residues: Melanocortin receptor 4 (332 aa).

The Extracellular portion of the chain corresponds to 1–43 (MNSTHHHGMHTSLHFWNRSTYGLHSNASEPLGKGYSEGGCYEQ). Residues asparagine 2, asparagine 17, and asparagine 26 are each glycosylated (N-linked (GlcNAc...) asparagine). Cystine bridges form between cysteine 40/cysteine 279 and cysteine 271/cysteine 277. Residues 44–69 (LFVSPEVFVTLGVISLLENILVIVAI) traverse the membrane as a helical segment. The Cytoplasmic segment spans residues 70-81 (AKNKNLHSPMYF). Residues 82-106 (FICSLAVADMLVSVSNGSETIVITL) traverse the membrane as a helical segment. Ca(2+) is bound by residues glutamate 100, aspartate 122, and aspartate 126. Over 107-123 (LNSTDTDAQSFTVNIDN) the chain is Extracellular. Residues 124–145 (VIDSVICSSLLASICSLLSIAV) traverse the membrane as a helical segment. Topologically, residues 146–165 (DRYFTIFYALQYHNIMTVKR) are cytoplasmic. The helical transmembrane segment at 166-186 (VGIIISCIWAVCTVSGVLFII) threads the bilayer. The Extracellular portion of the chain corresponds to 187–191 (YSDSS). The chain crosses the membrane as a helical span at residues 192-215 (AVIICLITVFFTMLALMASLYVHM). Over 216 to 248 (FLMARLHIKRIAVLPGTGTIRQGANMKGAITLT) the chain is Cytoplasmic. The chain crosses the membrane as a helical span at residues 249–271 (ILIGVFVVCWAPFFLHLIFYISC). Residues 272–280 (PQNPYCVCF) are Extracellular-facing. The helical transmembrane segment at 281 to 304 (MSHFNLYLILIMCNSIIDPLIYAL) threads the bilayer. At 305–332 (RSQELRKTFKEIICCYPLGGLCDLSSRY) the chain is on the cytoplasmic side. Cysteine 318 is lipidated: S-palmitoyl cysteine.

The protein belongs to the G-protein coupled receptor 1 family. Homodimer; disulfide-linked, also forms higher order oligomers. Interacts with GNAS. Interacts with ATRNL1. Interacts with MGRN1; this interaction competes with GNAS-binding and thus inhibits agonist-induced cAMP production. Interacts with MRAP and MRAP2; these associated factors increase ligand-sensitivity and generation of cAMP.

It localises to the cell membrane. Functionally, hormone receptor that acts as a key component of the leptin-melanocortin pathway at the intersection of homeostatic maintenance of energetic state. Plays a role in regulating food intake: activation by a stimulating hormone such as anorexigenic alpha-melanocyte stimulating hormone (alpha-MSH) inhibits appetite, whereas binding to a natural antagonist like Agouti-related protein/AGRP promotes appetite. G-protein-coupled receptor that activates conventional Galphas signaling leading to induction of anorexogenic signaling in the hypothalamus to result in negative energy balance. Regulates the firing activity of neurons from the hypothalamus by alpha-MSH and AGRP independently of Galphas signaling by ligand-induced coupling of closure of inwardly rectifying potassium channel KCNJ13. In intestinal epithelial cells, plays a role in the inhibition of hepatic glucose production via nesfatin-1/NUCB2 leading to increased cyclic adenosine monophosphate (cAMP) levels and glucagon-like peptide 1 (GLP-1) secretion in the intestinal epithelium. The protein is Melanocortin receptor 4 (MC4R) of Sus scrofa (Pig).